The sequence spans 176 residues: Large ribosomal subunit protein eL20 (176 aa).

Lys-11 is covalently cross-linked (Glycyl lysine isopeptide (Lys-Gly) (interchain with G-Cter in SUMO2)). Phosphotyrosine is present on Tyr-63. Residue Ser-71 is modified to Phosphoserine. Residue Lys-76 is modified to N6-succinyllysine. Residue Ser-123 is modified to Phosphoserine. Residues Lys-128 and Lys-170 each participate in a glycyl lysine isopeptide (Lys-Gly) (interchain with G-Cter in SUMO2) cross-link.

Belongs to the eukaryotic ribosomal protein eL20 family. Component of the large ribosomal subunit. Binds IPO9 with high affinity.

It is found in the cytoplasm. Component of the large ribosomal subunit. The ribosome is a large ribonucleoprotein complex responsible for the synthesis of proteins in the cell. This is Large ribosomal subunit protein eL20 (Rpl18a) from Mus musculus (Mouse).